The sequence spans 674 residues: Xaa-Pro aminopeptidase 2 (674 aa).

An N-terminal signal peptide occupies residues 1–22 (MAQAYWQCYPWLVLLCACAWSY). Asparagine 65 is a glycosylation site (N-linked (GlcNAc...) asparagine). Substrate is bound at residue arginine 116. N-linked (GlcNAc...) asparagine glycosylation is found at asparagine 270, asparagine 278, and asparagine 293. Histidine 430 is a substrate binding site. Zn(2+) contacts are provided by aspartate 450, aspartate 461, and histidine 524. 3 residues coordinate substrate: histidine 524, histidine 533, and glutamate 555. Zn(2+) contacts are provided by glutamate 555 and glutamate 569. The GPI-anchor amidated alanine moiety is linked to residue alanine 650. A propeptide spans 651–674 (RAPHIISWTSLWVASALAILSWSS) (removed in mature form).

Belongs to the peptidase M24B family. Homotrimer. Zn(2+) serves as cofactor. Post-translationally, N-glycosylated. In terms of tissue distribution, strongly expressed in small intestine, heart and lung. Also detected in testis, skeletal muscle, spleen, liver, kidney, brain, uterus, eye, lymph node, thymus, stomach, prostate and bone marrow.

The protein localises to the cell membrane. The catalysed reaction is Release of any N-terminal amino acid, including proline, that is linked to proline, even from a dipeptide or tripeptide.. Its function is as follows. Membrane-bound metalloprotease which catalyzes the removal of a penultimate prolyl residue from the N-termini of peptides, such as Arg-Pro-Pro. May play a role in the metabolism of the vasodilator bradykinin. In Mus musculus (Mouse), this protein is Xaa-Pro aminopeptidase 2.